We begin with the raw amino-acid sequence, 497 residues long: PHD finger protein 10 (497 aa).

Residues 1–61 (MAAAGPGAAL…SSRSCETSSQ (61 aa)) are disordered. Residues Ser11, Ser35, and Ser49 each carry the phosphoserine modification. The interval 88–184 (MLQEQVSEYL…HYKEYSQMQQ (97 aa)) is essential to induce neural progenitor proliferation. The segment at 88–294 (MLQEQVSEYL…PPLDPELPAL (207 aa)) is SAY. Lys240 is covalently cross-linked (Glycyl lysine isopeptide (Lys-Gly) (interchain with G-Cter in SUMO2)). Position 269 is a phosphoserine (Ser269). Low complexity predominate over residues 284 to 295 (EPPLDPELPALD). A disordered region spans residues 284-367 (EPPLDPELPA…KRSVLSKSVP (84 aa)). Residues 291 to 333 (LPALDSDGDSDDGEDGGGDEKRKNKGTSDSSSGNVSEGDSPPD) form an essential to induce neural progenitor proliferation region. Residues Ser296, Ser300, Ser326, and Ser330 each carry the phosphoserine modification. Acidic residues predominate over residues 296 to 307 (SDGDSDDGEDGG). Polar residues predominate over residues 317–327 (TSDSSSGNVSE). Basic and acidic residues predominate over residues 344 to 358 (KSKDKMATPRKDGSK). The PHD-type 1; degenerate zinc-finger motif lies at 378–435 (LCGICLKGKESNKKGKAESLIHCSQCDNSGHPSCLDMTMELVSMIKTYPWQCMECKTC). A Glycyl lysine isopeptide (Lys-Gly) (interchain with G-Cter in SUMO2) cross-link involves residue Lys384. The segment at 437–480 (ICGQPHHEEEMMFCDVCDRGYHTFCVGLGAIPSGRWICDCCQRA) adopts a PHD-type 2; degenerate zinc-finger fold.

The protein belongs to the SAYP family. As to quaternary structure, component of neural progenitors-specific chromatin remodeling complex (npBAF complex) composed of at least, ARID1A/BAF250A or ARID1B/BAF250B, SMARCD1/BAF60A, SMARCD3/BAF60C, SMARCA2/BRM/BAF190B, SMARCA4/BRG1/BAF190A, SMARCB1/BAF47, SMARCC1/BAF155, SMARCE1/BAF57, SMARCC2/BAF170, PHF10/BAF45A, ACTL6A/BAF53A and actin. Interacts with ACTL6A/BAF53A, SMARCA2/BRM/BAF190B, SMARCA4/BRG1/BAF190A and PBRM1/BAF180.

The protein localises to the nucleus. Its function is as follows. Involved in transcription activity regulation by chromatin remodeling. Belongs to the neural progenitors-specific chromatin remodeling complex (npBAF complex) and is required for the proliferation of neural progenitors. During neural development a switch from a stem/progenitor to a post-mitotic chromatin remodeling mechanism occurs as neurons exit the cell cycle and become committed to their adult state. The transition from proliferating neural stem/progenitor cells to post-mitotic neurons requires a switch in subunit composition of the npBAF and nBAF complexes. As neural progenitors exit mitosis and differentiate into neurons, npBAF complexes which contain ACTL6A/BAF53A and PHF10/BAF45A, are exchanged for homologous alternative ACTL6B/BAF53B and DPF1/BAF45B or DPF3/BAF45C subunits in neuron-specific complexes (nBAF). The npBAF complex is essential for the self-renewal/proliferative capacity of the multipotent neural stem cells. The nBAF complex along with CREST plays a role regulating the activity of genes essential for dendrite growth. This is PHD finger protein 10 (Phf10) from Rattus norvegicus (Rat).